The chain runs to 688 residues: Polyribonucleotide nucleotidyltransferase (688 aa).

Positions 484 and 490 each coordinate Mg(2+). Positions 550–609 (PTTEIFNVAPDKIIEIIGQGGRVIREIVEKFEVKIDLNKPSGEVKIMGNKERVLKTKEFI) constitute a KH domain. One can recognise an S1 motif domain in the interval 626-688 (DEVLEAQVKR…NKGKIALDLA (63 aa)).

It belongs to the polyribonucleotide nucleotidyltransferase family. Mg(2+) serves as cofactor.

The protein resides in the cytoplasm. The catalysed reaction is RNA(n+1) + phosphate = RNA(n) + a ribonucleoside 5'-diphosphate. Involved in mRNA degradation. Catalyzes the phosphorolysis of single-stranded polyribonucleotides processively in the 3'- to 5'-direction. The polypeptide is Polyribonucleotide nucleotidyltransferase (Helicobacter acinonychis (strain Sheeba)).